The sequence spans 1624 residues: Latent-transforming growth factor beta-binding protein 4 (1624 aa).

An N-terminal signal peptide occupies residues 1–27 (MPRPGTSGRRPLLLVLLLPLFAAATSA). A disordered region spans residues 125–146 (RRPRGPGGRGLLRRRPPQRAPA). In terms of domain architecture, EGF-like 1 spans 149–181 (APVLCPLICHNGGVCVKPDRCLCPPDFAGKFCQ). 6 disulfide bridges follow: cysteine 153–cysteine 163, cysteine 157–cysteine 169, cysteine 171–cysteine 180, cysteine 289–cysteine 311, cysteine 298–cysteine 324, and cysteine 312–cysteine 327. The TB 1 domain occupies 287–339 (GYCFRELRGGECASPLPGLRTQEVCCRGAGLAWGVHDCQLCSERLGNSERVSA). Asparagine 352 carries an N-linked (GlcNAc...) asparagine glycan. The EGF-like 2; calcium-binding domain occupies 357–397 (DVDECATGGRCQHGECANTRGGYTCVCPDGFLLDSSRSSCI). Cystine bridges form between cysteine 361–cysteine 372, cysteine 367–cysteine 381, cysteine 383–cysteine 396, cysteine 409–cysteine 431, cysteine 418–cysteine 444, cysteine 432–cysteine 447, and cysteine 433–cysteine 459. The TB 2 domain maps to 407 to 459 (GPCFRVLRDGGCSLPILRNITKQICCCSRVGKAWGRGCQLCPPFGSEGFREIC). Asparagine 425 is a glycosylation site (N-linked (GlcNAc...) asparagine). The segment at 474–546 (YNTRPLGQEP…PEIPESGPSS (73 aa)) is disordered. The span at 487–500 (SLSQPRTLPATSRP) shows a compositional bias: polar residues. Basic and acidic residues predominate over residues 508 to 522 (HRLEPRPEPRPDPRP). In terms of domain architecture, EGF-like 3 spans 545–586 (SSGMCQRNPQVCGPGRCISRPSGYTCACDSGFRLSPQGTRCI). 30 disulfides stabilise this stretch: cysteine 549/cysteine 561, cysteine 556/cysteine 570, cysteine 572/cysteine 585, cysteine 591/cysteine 603, cysteine 598/cysteine 612, cysteine 614/cysteine 627, cysteine 633/cysteine 645, cysteine 640/cysteine 654, cysteine 656/cysteine 669, cysteine 675/cysteine 687, cysteine 682/cysteine 696, cysteine 698/cysteine 707, cysteine 714/cysteine 726, cysteine 721/cysteine 735, cysteine 737/cysteine 750, cysteine 756/cysteine 768, cysteine 763/cysteine 777, cysteine 779/cysteine 792, cysteine 838/cysteine 851, cysteine 845/cysteine 860, cysteine 862/cysteine 876, cysteine 882/cysteine 894, cysteine 888/cysteine 903, cysteine 905/cysteine 918, cysteine 924/cysteine 935, cysteine 930/cysteine 944, cysteine 946/cysteine 959, cysteine 1053/cysteine 1065, cysteine 1059/cysteine 1074, and cysteine 1076/cysteine 1089. The 42-residue stretch at 587-628 (DVDECRRVPPPCAPGRCENSPGSFRCVCGPGFRAGPRAAECL) folds into the EGF-like 4; calcium-binding domain. Residues 629-670 (DVDECHRVPPPCDLGRCENTPGSFLCVCPAGYQAAPHGASCQ) enclose the EGF-like 5; calcium-binding domain. The EGF-like 6; calcium-binding domain occupies 671–708 (DVDECTQSPGLCGRGACKNLPGSFRCVCPAGFRGSACE). Residues 710-751 (DVDECAQEPPPCGPGRCDNTAGSFHCACPAGFRSRGPGAPCQ) form the EGF-like 7; calcium-binding domain. The EGF-like 8; calcium-binding domain occupies 752–793 (DVDECARSPPPCTYGRCENTEGSFQCVCPMGFQPNTAGSECE). Residues 834–877 (DVDECSSGAPPCGPHGHCTNTEGSFRCSCAPGYRAPSGRPGPCA) form the EGF-like 9; calcium-binding domain. One can recognise an EGF-like 10; calcium-binding domain in the interval 878–919 (DVNECLEGDFCFPHGECLNTDGSFACTCAPGYRPGPRGASCL). The EGF-like 11; calcium-binding domain maps to 920–960 (DVDECSEEDLCQSGICTNTDGSFECICPPGHRAGPDLASCL). In terms of domain architecture, EGF-like 12; calcium-binding spans 1049–1090 (DVDECRNRSFCGAHAVCQNLPGSFQCLCDQGYEGARDGRHCV). N-linked (GlcNAc...) asparagine glycosylation occurs at asparagine 1055. Residues 1130 to 1179 (GRCVPPRTSAGTFPGSQPQAPASPVLPARPPPPPLPRRPSTPRQGPVGSG) form a disordered region. A compositionally biased stretch (polar residues) spans 1138 to 1149 (SAGTFPGSQPQA). Positions 1156 to 1168 (PARPPPPPLPRRP) are enriched in pro residues. In terms of domain architecture, TB 3 spans 1181–1235 (RECYFDTAAPDACDNILARNVTWQECCCTVGEGWGSGCRIQQCPGTETAEYQSLC). 10 disulfide bridges follow: cysteine 1183–cysteine 1206, cysteine 1193–cysteine 1218, cysteine 1207–cysteine 1223, cysteine 1208–cysteine 1235, cysteine 1257–cysteine 1270, cysteine 1265–cysteine 1279, cysteine 1281–cysteine 1294, cysteine 1300–cysteine 1312, cysteine 1307–cysteine 1321, and cysteine 1323–cysteine 1336. N-linked (GlcNAc...) asparagine glycosylation occurs at asparagine 1200. In terms of domain architecture, EGF-like 13; calcium-binding spans 1253–1295 (DVDECQLFRDQVCKSGVCVNTAPGYSCYCSNGYYYHTQRLECI). In terms of domain architecture, EGF-like 14; calcium-binding spans 1296–1337 (DNDECADEEPACEGGRCVNTVGSYHCTCEPPLVLDGSQRRCV). Asparagine 1339 carries N-linked (GlcNAc...) asparagine glycosylation. The TB 4 domain maps to 1349–1402 (GVCWQEVGADLVCSHPRLDRQATYTECCCLYGEAWGMDCALCPAQDSDDFEALC). Intrachain disulfides connect cysteine 1351/cysteine 1375, cysteine 1361/cysteine 1387, cysteine 1376/cysteine 1390, and cysteine 1377/cysteine 1402. The span at 1446–1458 (ALPYDPYPPPPGP) shows a compositional bias: pro residues. A disordered region spans residues 1446–1524 (ALPYDPYPPP…PPEGGSYAGS (79 aa)). Positions 1501 to 1510 (RSRDTRRSFP) are enriched in basic and acidic residues. EGF-like domains are found at residues 1533–1573 (EAEE…MACV) and 1574–1618 (DINE…HHCA). 6 disulfides stabilise this stretch: cysteine 1537-cysteine 1548, cysteine 1543-cysteine 1557, cysteine 1559-cysteine 1572, cysteine 1578-cysteine 1593, cysteine 1588-cysteine 1602, and cysteine 1604-cysteine 1617.

Belongs to the LTBP family. In terms of assembly, forms part of the large latent transforming growth factor beta precursor complex; removal is essential for activation of complex. Interacts with LTBP1 and TGFB1. Interacts with EFEMP2; this interaction promotes fibrillar deposition of EFEMP2. Contains hydroxylated asparagine residues. As to expression, highly expressed in heart, skeletal muscle, pancreas, uterus, and small intestine. Weakly expressed in placenta and lung.

It is found in the secreted. The protein localises to the extracellular space. It localises to the extracellular matrix. Functionally, key regulator of transforming growth factor beta (TGFB1, TGFB2 and TGFB3) that controls TGF-beta activation by maintaining it in a latent state during storage in extracellular space. Associates specifically via disulfide bonds with the Latency-associated peptide (LAP), which is the regulatory chain of TGF-beta, and regulates integrin-dependent activation of TGF-beta. This is Latent-transforming growth factor beta-binding protein 4 (LTBP4) from Homo sapiens (Human).